We begin with the raw amino-acid sequence, 62 residues long: Protein DsrB (62 aa).

The protein belongs to the DsrB family.

This Escherichia fergusonii (strain ATCC 35469 / DSM 13698 / CCUG 18766 / IAM 14443 / JCM 21226 / LMG 7866 / NBRC 102419 / NCTC 12128 / CDC 0568-73) protein is Protein DsrB.